The chain runs to 216 residues: Sperm microtubule inner protein 8 (216 aa).

In terms of assembly, microtubule inner protein component of sperm flagellar doublet microtubules. In terms of tissue distribution, expressed in testis.

The protein localises to the cytoplasm. Its subcellular location is the cytoskeleton. The protein resides in the flagellum axoneme. In terms of biological role, microtubule inner protein (MIP) part of the dynein-decorated doublet microtubules (DMTs) in flagellum axoneme. May serve to reinforce and thus stabilize the microtubule structure in the sperm flagella. The chain is Sperm microtubule inner protein 8 (Spmip8) from Mus musculus (Mouse).